The following is a 327-amino-acid chain: Flotillin-like protein FloA (327 aa).

A helical transmembrane segment spans residues 7–27 (FLVPILIVILLLVFFSLVPVG).

It belongs to the flotillin-like FloA family. As to quaternary structure, homooligomerizes.

Its subcellular location is the cell membrane. The protein localises to the membrane raft. Its function is as follows. Found in functional membrane microdomains (FMM) that may be equivalent to eukaryotic membrane rafts. FMMs are highly dynamic and increase in number as cells age. Flotillins are thought to be important factors in membrane fluidity. This chain is Flotillin-like protein FloA, found in Finegoldia magna (strain ATCC 29328 / DSM 20472 / WAL 2508) (Peptostreptococcus magnus).